The chain runs to 1039 residues: uncharacterized protein (1039 aa).

The span at 1–19 (MSLLMAHRKSKSSQRKLRN) shows a compositional bias: basic residues. The tract at residues 1–38 (MSLLMAHRKSKSSQRKLRNRSSSLTPQKRRIRASKGSH) is disordered.

This is an uncharacterized protein from Sinorhizobium fredii (strain NBRC 101917 / NGR234).